Consider the following 473-residue polypeptide: Photosystem II CP43 reaction center protein (473 aa).

A propeptide spanning residues 1 to 14 (MKTLYSLRRFYPVE) is cleaved from the precursor. N-acetylthreonine is present on threonine 15. Residue threonine 15 is modified to Phosphothreonine. The next 5 membrane-spanning stretches (helical) occupy residues 69-93 (LFEVAHFVPEKPMYEQGLILLPHLA), 134-155 (LLGPETLEESFPFFGYVWKDRN), 178-200 (KALYFGGVYDTWAPGGGDVRKIT), 255-275 (KPFAWARRAFVWSGEAYLSYS), and 291-312 (WFNNTAYPSEFYGPTGPEASQA). Glutamate 367 provides a ligand contact to [CaMn4O5] cluster. A helical membrane pass occupies residues 447–471 (RARAAAAGFEKGIDRDFEPVLSMTP).

It belongs to the PsbB/PsbC family. PsbC subfamily. PSII is composed of 1 copy each of membrane proteins PsbA, PsbB, PsbC, PsbD, PsbE, PsbF, PsbH, PsbI, PsbJ, PsbK, PsbL, PsbM, PsbT, PsbX, PsbY, PsbZ, Psb30/Ycf12, at least 3 peripheral proteins of the oxygen-evolving complex and a large number of cofactors. It forms dimeric complexes. Binds multiple chlorophylls and provides some of the ligands for the Ca-4Mn-5O cluster of the oxygen-evolving complex. It may also provide a ligand for a Cl- that is required for oxygen evolution. PSII binds additional chlorophylls, carotenoids and specific lipids. serves as cofactor.

The protein localises to the plastid. The protein resides in the chloroplast thylakoid membrane. Functionally, one of the components of the core complex of photosystem II (PSII). It binds chlorophyll and helps catalyze the primary light-induced photochemical processes of PSII. PSII is a light-driven water:plastoquinone oxidoreductase, using light energy to abstract electrons from H(2)O, generating O(2) and a proton gradient subsequently used for ATP formation. This is Photosystem II CP43 reaction center protein from Amborella trichopoda.